Reading from the N-terminus, the 1194-residue chain is Immunoglobulin superfamily member 3 (1194 aa).

Positions 1–19 are cleaved as a signal peptide; that stretch reads MKCFFPVLSCLAVLGVVSA. Ig-like C2-type domains follow at residues 20 to 138, 143 to 262, 276 to 386, 401 to 539, 545 to 661, 676 to 803, 813 to 945, and 949 to 1097; these read QRQV…AKMN, PDSL…WYAM, PTDK…KTVT, PIIV…ISIT, FAVT…WTRL, PVTK…EEVS, PDSR…TALT, and PDAS…YRLT. Over 20–1124 the chain is Extracellular; it reads QRQVTVQEGP…LQSIICSNDA (1105 aa). Intrachain disulfides connect cysteine 42–cysteine 120 and cysteine 167–cysteine 246. N-linked (GlcNAc...) asparagine glycosylation occurs at asparagine 43. Positions 250-252 match the EWI motif motif; it reads EWI. A disulfide bond links cysteine 302 and cysteine 376. Asparagine 418 carries an N-linked (GlcNAc...) asparagine glycan. Disulfide bonds link cysteine 432-cysteine 511 and cysteine 566-cysteine 645. Asparagine 655 carries N-linked (GlcNAc...) asparagine glycosylation. Disulfide bonds link cysteine 701–cysteine 782, cysteine 838–cysteine 918, and cysteine 974–cysteine 1080. A glycan (N-linked (GlcNAc...) asparagine) is linked at asparagine 842. The segment at 997–1033 is disordered; sequence AGGKRSSPGLEEQEEEREEEEEEDDDDDDDPTERTAL. The span at 1007-1027 shows a compositional bias: acidic residues; sequence EEQEEEREEEEEEDDDDDDDP. An N-linked (GlcNAc...) asparagine glycan is attached at asparagine 1077. The chain crosses the membrane as a helical span at residues 1125–1145; it reads LFYFVFFYPFPIFGILIITIL. The Cytoplasmic segment spans residues 1146-1194; the sequence is LVRFKSRNSSKNSDGKNGVPLLWIKEPHLNYSPTCLEPPVLSIHPGAID.

Expressed in a wide range of tissues with High expression in Placenta, kidney and lung.

It localises to the membrane. The sequence is that of Immunoglobulin superfamily member 3 (IGSF3) from Homo sapiens (Human).